A 396-amino-acid polypeptide reads, in one-letter code: Tryptophan synthase beta chain (396 aa).

Lys-88 carries the post-translational modification N6-(pyridoxal phosphate)lysine.

Belongs to the TrpB family. Tetramer of two alpha and two beta chains. Pyridoxal 5'-phosphate serves as cofactor.

It carries out the reaction (1S,2R)-1-C-(indol-3-yl)glycerol 3-phosphate + L-serine = D-glyceraldehyde 3-phosphate + L-tryptophan + H2O. The protein operates within amino-acid biosynthesis; L-tryptophan biosynthesis; L-tryptophan from chorismate: step 5/5. Its function is as follows. The beta subunit is responsible for the synthesis of L-tryptophan from indole and L-serine. In Shewanella sp. (strain ANA-3), this protein is Tryptophan synthase beta chain.